Consider the following 77-residue polypeptide: Apelin (77 aa).

The N-terminal stretch at M1–G22 is a signal peptide. A propeptide spanning residues V23–Y41 is cleaved from the precursor. The tract at residues P45–F77 is disordered. Over residues G58–H71 the composition is skewed to basic residues.

It belongs to the apelin family. Post-translationally, several active peptides may be produced by proteolytic processing of the peptide precursor. As to expression, expressed in the lung, testis, ovary, uterus and mammary gland. Expressed in neurons in the thalamic paraventricular and hypothalamic supraoptic nuclei. The lung, testis and uterus mainly contain a large form that looks like apelin-36, whereas the mammary gland seems to contain 2 forms of apelin, a large form close to apelin-36 and a small form close to apelin-13 (at protein level). Widely expressed in the adult, with highest levels in the mammary gland of lactating animals, very high levels in the lung, intermediate levels in the spinal cord, ovary, adipose tissue, brain (neuronal cell bodies and fibers in the supraoptic and the paraventricular nuclei), heart and testis, and lowest levels in the pituitary gland, kidney, stomach, uterus and pancreas.

The protein localises to the secreted. Its subcellular location is the extracellular space. Its function is as follows. Peptide hormone that functions as endogenous ligand for the G-protein-coupled apelin receptor (APLNR/APJ), that plays a role in cadiovascular homeostasis. Functions as a balanced agonist activating both G(i) protein pathway and beta-arrestin pathway of APLNR. Downstream G proteins activation, apelin can inhibit cAMP production and activate key intracellular effectors such as ERKs. On the other hand, APLNR activation induces beta-arrestin recruitment to the membrane leading to desensitization and internalization of the receptor. Apelin blunts cardiac hypertrophic induction from APLNR on response to pathological stimuli, but also induces myocardial hypertrophy under normal conditions. Apelin-36 dissociates more hardly than (pyroglu)apelin-13 from APLNR. Involved in the regulation of cardiac precursor cell movements during gastrulation and heart morphogenesis. Has an inhibitory effect on cytokine production in response to T-cell receptor/CD3 cross-linking; the oral intake of apelin in the colostrum and the milk might therefore modulate immune responses in neonates. Plays a role in early coronary blood vessels formation. Mediates myocardial contractility in an ERK1/2-dependent manner. May also have a role in the central control of body fluid homeostasis by influencing vasopressin release and drinking behavior. This Rattus norvegicus (Rat) protein is Apelin.